Reading from the N-terminus, the 192-residue chain is UPF0312 protein YE1254 (192 aa).

An N-terminal signal peptide occupies residues 1–23 (MFNKTLLGLTVGALMFTAGSAVA).

The protein belongs to the UPF0312 family. Type 1 subfamily.

It localises to the periplasm. This chain is UPF0312 protein YE1254, found in Yersinia enterocolitica serotype O:8 / biotype 1B (strain NCTC 13174 / 8081).